Here is a 156-residue protein sequence, read N- to C-terminus: Small ribosomal subunit protein uS7 (156 aa).

It belongs to the universal ribosomal protein uS7 family. Part of the 30S ribosomal subunit. Contacts proteins S9 and S11.

One of the primary rRNA binding proteins, it binds directly to 16S rRNA where it nucleates assembly of the head domain of the 30S subunit. Is located at the subunit interface close to the decoding center, probably blocks exit of the E-site tRNA. The protein is Small ribosomal subunit protein uS7 of Azorhizobium caulinodans (strain ATCC 43989 / DSM 5975 / JCM 20966 / LMG 6465 / NBRC 14845 / NCIMB 13405 / ORS 571).